A 236-amino-acid polypeptide reads, in one-letter code: Probable transmembrane ascorbate ferrireductase 4 (236 aa).

Residues 14-210 form the Cytochrome b561 domain; sequence FARLSGLVVA…LGCIVITAAI (197 aa). 3 consecutive transmembrane segments (helical) span residues 17–37, 42–62, and 76–96; these read LSGLVVAVSVLYWALFLPNLG, TLHPLLMVIGFILVSGEAILI, and VHLWLQGMALASAVFGIWTKF. Residues histidine 44, histidine 77, and histidine 110 each coordinate heme b. 3 consecutive transmembrane segments (helical) span residues 112-132, 144-164, and 191-211; these read WMGLLSVSLFAAQWVTGFMSF, TFLPWHVFLGLYTYGLAIATA, and VNGLGLGLALLGCIVITAAIL. Residue histidine 149 coordinates heme b.

In terms of assembly, homodimer. Heme b serves as cofactor.

The protein resides in the membrane. It carries out the reaction Fe(3+)(out) + L-ascorbate(in) = monodehydro-L-ascorbate radical(in) + Fe(2+)(out) + H(+). Its function is as follows. Two-heme-containing cytochrome. May catalyze ascorbate-dependent trans-membrane ferric-chelate reduction. In Arabidopsis thaliana (Mouse-ear cress), this protein is Probable transmembrane ascorbate ferrireductase 4 (CYB561D).